Here is a 419-residue protein sequence, read N- to C-terminus: UDP-N-acetylglucosamine 1-carboxyvinyltransferase 2 (419 aa).

24 to 25 lines the phosphoenolpyruvate pocket; the sequence is KN. Arginine 94 lines the UDP-N-acetyl-alpha-D-glucosamine pocket. The active-site Proton donor is cysteine 118. At cysteine 118 the chain carries 2-(S-cysteinyl)pyruvic acid O-phosphothioketal. Residues 123–127, aspartate 307, and isoleucine 329 contribute to the UDP-N-acetyl-alpha-D-glucosamine site; that span reads RPIDQ.

It belongs to the EPSP synthase family. MurA subfamily.

It localises to the cytoplasm. The catalysed reaction is phosphoenolpyruvate + UDP-N-acetyl-alpha-D-glucosamine = UDP-N-acetyl-3-O-(1-carboxyvinyl)-alpha-D-glucosamine + phosphate. It functions in the pathway cell wall biogenesis; peptidoglycan biosynthesis. In terms of biological role, cell wall formation. Adds enolpyruvyl to UDP-N-acetylglucosamine. This Staphylococcus epidermidis (strain ATCC 12228 / FDA PCI 1200) protein is UDP-N-acetylglucosamine 1-carboxyvinyltransferase 2.